The primary structure comprises 214 residues: uncharacterized protein (214 aa).

5 consecutive transmembrane segments (helical) span residues 33–53 (VILF…ILVV), 104–124 (ILGI…SYVL), 132–152 (FIYL…LSAS), 153–173 (GGVL…FGTK), and 186–206 (LLIL…TITF).

It localises to the cell membrane. This is an uncharacterized protein from Methanocaldococcus jannaschii (strain ATCC 43067 / DSM 2661 / JAL-1 / JCM 10045 / NBRC 100440) (Methanococcus jannaschii).